Reading from the N-terminus, the 87-residue chain is MANIKSKQKAILYNQKANAYNSAVKSTVKTAIKKAKLAADQQDAKLSDFVSKAHHEIDKAVSKGVLHKNNGSRKASRLDAYVQSKQQ.

A disordered region spans residues 67–87; sequence HKNNGSRKASRLDAYVQSKQQ.

This sequence belongs to the bacterial ribosomal protein bS20 family.

In terms of biological role, binds directly to 16S ribosomal RNA. This is Small ribosomal subunit protein bS20 from Metamycoplasma arthritidis (strain 158L3-1) (Mycoplasma arthritidis).